Consider the following 1096-residue polypeptide: Protein EMBRYONIC FLOWER 1 (1096 aa).

Disordered stretches follow at residues 155 to 189 (KARG…EKLN), 274 to 296 (KTSG…VRGR), 315 to 348 (GATS…KGKQ), 366 to 420 (ETSQ…KKPV), 563 to 612 (LSRV…DIPM), 629 to 651 (DKEE…KNAL), 1007 to 1032 (DKEK…KNSS), and 1070 to 1096 (FKKK…TQNA). 2 short sequence motifs (nuclear localization signal) span residues 170–177 (SRKLVSPE) and 281–288 (IRKEESAL). Basic and acidic residues predominate over residues 281-294 (IRKEESALKKESVR). Over residues 315–337 (GATSENASKSCDSDQGNSESTDS) the composition is skewed to polar residues. Positions 337 to 617 (SGFDRTPFKG…DDIPMEIVEL (281 aa)) are DNA-binding. Positions 371 to 381 (GIKEHDADPSK) are enriched in basic and acidic residues. The span at 382–394 (RSTPAHSLFTGND) shows a compositional bias: polar residues. Residues 572–601 (SGADRKGKTVMVQEHHGAPRSQSHDRKETT) show a composition bias toward basic and acidic residues. The interval 866–1096 (LDPRLRSTTP…KPVCPPTQNA (231 aa)) is DNA-binding. The segment covering 1018–1032 (SCNNNASAGPVKNSS) has biased composition (polar residues). Residues 1071 to 1078 (KKKPAVCK) carry the Nuclear localization signal 3 motif.

As to quaternary structure, interacts with MSI1. In terms of tissue distribution, expressed in mature embryo, root tips, cotyledons, leaves, stems, shoot apex, and flower clusters, with highest levels in flowers. The presence in the shoot apical meristem (SAM) is required to maintain vegetative development and prevent early flowering.

Its subcellular location is the nucleus. Functionally, transcription repressor that regulates phase transition during shoot, flower and seeds development. Controls leaves development, shoot architecture and flowering by delaying both the vegetative to reproductive transition and flower initiation. Participates in polycomb group (PcG) protein complex-mediated (including EMF2) silencing of the flower homeotic genes AGAMOUS (AG), PISTILLATA (PI), and APETALA3 (AP3), as well as of some regulatory genes such as ABSCISIC ACID INSENSITIVE3 (ABI3), LONG VEGETATIVE PHASE1 (LOV1), and FLOWERING LOCUS C (FLC) during vegetative development. Required for histone methylation or for maintaining a stable histone methylation (e.g. H3K27me3) pattern of repressed target genes (including genes involved in salt stress response and flower development); this repression is counteracted by ULT1. Can bind non specifically DNA (both double- and single-stranded) and RNA. This is Protein EMBRYONIC FLOWER 1 from Arabidopsis thaliana (Mouse-ear cress).